A 173-amino-acid chain; its full sequence is Sporulation-specific protein 12 (173 aa).

The span at 1–12 (MSNKASDQSART) shows a compositional bias: polar residues. Residues 1–56 (MSNKASDQSARTASILKTDITRENTITRSSSSNNDNYHHHNNINNYNESAKTGEDA) are disordered. N-acetylserine is present on S2. Phosphoserine is present on residues S118 and S125. The tract at residues 159–173 (DSEDVEIDEDEEYFY) is negative-charged tail.

It is required for meiosis I chromosome division during sporulation. A component of the FEAR (CDC14 early anaphase release) network which promotes CDC14 release from the nucleolus during early anaphase. This is Sporulation-specific protein 12 (SPO12) from Saccharomyces cerevisiae (strain ATCC 204508 / S288c) (Baker's yeast).